The sequence spans 1265 residues: Methionine synthase (1265 aa).

Residues 19 to 338 (RDEINAILQK…DHIREIAEAV (320 aa)) form the Hcy-binding domain. Cys260, Cys323, and Cys324 together coordinate Zn(2+). The Pterin-binding domain occupies 371 to 632 (FVNIGERCNV…IHKELLQLCE (262 aa)). Residues 382–384 (GSR), Asp449, Asn470, Asp537, Asn579, Arg585, and Arg591 contribute to the (6S)-5,6,7,8-tetrahydrofolate site. Positions 662–759 (QTDEWRNGPV…FMEKEREETR (98 aa)) constitute a B12-binding N-terminal domain. Methylcob(III)alamin-binding positions include Glu709, 782–786 (GDVHD), His785, Ser830, Thr834, and Ala886. The 136-residue stretch at 772–907 (QGTIVLATVK…DENLKDEYFE (136 aa)) folds into the B12-binding domain. The AdoMet activation domain occupies 923-1265 (SLKERRYLPL…LGPILGYDTD (343 aa)). Residues Asp974, Arg1172, and 1227–1228 (YF) contribute to the S-adenosyl-L-methionine site. The residue at position 1264 (Thr1264) is a Phosphothreonine.

Belongs to the vitamin-B12 dependent methionine synthase family. As to quaternary structure, monomer. Dimer. Forms a multiprotein complex with MMACHC, MMADHC and MTRR. Methylcob(III)alamin serves as cofactor. The cofactor is Zn(2+). Widely expressed. Expressed at the highest levels in pancreas, heart, brain, skeletal muscle and placenta. Expressed at lower levels in lung, liver and kidney.

It is found in the cytoplasm. The catalysed reaction is (6S)-5-methyl-5,6,7,8-tetrahydrofolate + L-homocysteine = (6S)-5,6,7,8-tetrahydrofolate + L-methionine. The protein operates within amino-acid biosynthesis; L-methionine biosynthesis via de novo pathway; L-methionine from L-homocysteine (MetH route): step 1/1. Catalyzes the transfer of a methyl group from methylcob(III)alamin (MeCbl) to homocysteine, yielding enzyme-bound cob(I)alamin and methionine in the cytosol. MeCbl is an active form of cobalamin (vitamin B12) used as a cofactor for methionine biosynthesis. Cob(I)alamin form is regenerated to MeCbl by a transfer of a methyl group from 5-methyltetrahydrofolate. The processing of cobalamin in the cytosol occurs in a multiprotein complex composed of at least MMACHC, MMADHC, MTRR (methionine synthase reductase) and MTR which may contribute to shuttle safely and efficiently cobalamin towards MTR in order to produce methionine. The chain is Methionine synthase from Homo sapiens (Human).